Reading from the N-terminus, the 368-residue chain is Histone macroH2A1.1 (368 aa).

The tract at residues 154 to 177 (AVSSSSAAASSSSSASSSSSVAPK) is disordered. The region spanning 184–368 (TILSKKTLHL…VYNAELINTN (185 aa)) is the Macro domain. A glycoprotein-binding residues include aspartate 203, leucine 204, glutamine 225, valine 226, serine 275, glycine 313, serine 314, glycine 315, asparagine 316, and asparagine 317.

It belongs to the histone H2A family. The nucleosome is a histone octamer containing two molecules each of H2A, H2B, H3 and H4 assembled in one H3-H4 heterotetramer and two H2A-H2B heterodimers.

It is found in the nucleus. The protein resides in the chromosome. Its function is as follows. Variant histone H2A which replaces conventional H2A in a subset of nucleosomes where it represses transcription. Nucleosomes wrap and compact DNA into chromatin, limiting DNA accessibility to the cellular machineries which require DNA as a template. Histones thereby play a central role in transcription regulation, DNA repair, DNA replication and chromosomal stability. DNA accessibility is regulated via a complex set of post-translational modifications of histones, also called histone code, and nucleosome remodeling. In terms of biological role, specifically binds poly-ADP-ribose and plays a key role in NAD(+) metabolism. Able to bind to the ends of poly-ADP-ribose chains created by PARP1 and cap them. This prevents PARP1 from further addition of ADP-ribose and thus limits the consumption of nuclear NAD(+), allowing the cell to maintain proper NAD(+) levels in both the nucleus and the mitochondria to promote proper mitochondrial respiration. This chain is Histone macroH2A1.1, found in Capsaspora owczarzaki (strain ATCC 30864).